The primary structure comprises 775 residues: MKFLSLLLLVGVAQAIVPPREPRPPTGGGKKLLTYKECVPRATLAPRSTSLAWINSDEDGQYISQSDDGALILQNIVTNTNKTLVAADKVPKGFYDYWIKPDLTAVLWATNYTKQYRHSYFANYFILDIEKGSLTPLAEDQSGDIQYAQWNPVDNSIAYVRGNDLYVWNSGKTKRITENGGPDTFNGVPDWVYEEEIFGDRFALWFSPDGEYLAYLRFNETGVPTYTVPYYKNKQKIAPAYPRELEIRYPKVSAKNPTVQFHLLNLASSEETSIPVTAFPEDDLIIGEVAWLSSGHDSVAFRAFNRVQDTEKIVNVKVGSKESKVIRERDGTDGWIDNLLSMSYIGKVNGKEYYVDISDASGWAHLYLYPVDGGKEIALTKGEWEVTAILKVDTKSKLIYFTSTKFHSTTRHVYSVSYDTKVMTPLVNDREAAYYSASFSAKGGYYILSYQGPNVPYQELYSVKDKKKPIKTITSNDALIEKLKDYKLPKITFFEIKLPSGESLNVMQRLPPNFNPFKKYPVLFTPYGGPGAQEVSQAWKALDFKAYITSDPELEYVTWTVDNRGTGFKGRKFRSTVTKRLGFLEPQDQVFAAKEILKNRWADKDHVGMWGWSYGGFLTAKTMETDSGVFTFGMSTAPVSDFRLYDSMYTERYMKTVELNADGYSETAVHKTDGFKNLKGHYLIQHGTGDDNVHFQNSAVLSNTLMNGGVTPDRLTTQWFTDSDHGVRYDNDSTFQYKQLTKMVYDQKQPRPQTTPLHQWSKRVLAALFGEEAEE.

The N-terminal stretch at 1 to 15 (MKFLSLLLLVGVAQA) is a signal peptide. N-linked (GlcNAc...) asparagine glycosylation is found at Asn81, Asn111, and Asn219. Residues Ser613, Asp690, and His725 each act as charge relay system in the active site. N-linked (GlcNAc...) asparagine glycosylation occurs at Asn731.

The protein belongs to the peptidase S9B family.

It localises to the secreted. The enzyme catalyses Release of an N-terminal dipeptide, Xaa-Yaa-|-Zaa-, from a polypeptide, preferentially when Yaa is Pro, provided Zaa is neither Pro nor hydroxyproline.. Its function is as follows. Extracellular dipeptidyl-peptidase which removes N-terminal dipeptides sequentially from polypeptides having unsubstituted N-termini provided that the penultimate residue is proline. Contributes to pathogenicity. This chain is Dipeptidyl peptidase 4 (DPP4), found in Arthroderma otae (strain ATCC MYA-4605 / CBS 113480) (Microsporum canis).